The following is a 165-amino-acid chain: Large ribosomal subunit protein uL11 (165 aa).

It belongs to the universal ribosomal protein uL11 family. In terms of assembly, part of the ribosomal stalk of the 50S ribosomal subunit. Interacts with L10 and the large rRNA to form the base of the stalk. L10 forms an elongated spine to which L12 dimers bind in a sequential fashion forming a multimeric L10(L12)X complex.

In terms of biological role, forms part of the ribosomal stalk which helps the ribosome interact with GTP-bound translation factors. The protein is Large ribosomal subunit protein uL11 of Thermococcus kodakarensis (strain ATCC BAA-918 / JCM 12380 / KOD1) (Pyrococcus kodakaraensis (strain KOD1)).